The primary structure comprises 240 residues: Small ribosomal subunit protein uS2c (240 aa).

It belongs to the universal ribosomal protein uS2 family.

It localises to the plastid. Its subcellular location is the chloroplast. The polypeptide is Small ribosomal subunit protein uS2c (rps2) (Euglena gracilis).